We begin with the raw amino-acid sequence, 545 residues long: MTHFIFVTGGVVSSLGKGISAASVAALLEARGLKVTMVKMDPYINVDPGTMSPFQHGEVFVTEDGAETDLDLGYYERFLRRAKMTKLNNFTSGRVYQDVLNKERRGDYLGGTVQVIPHITDNIKERVLRAGEGYDVAIVEIGGTVGDIESLPFMESVRQLMVELGHKRTMLMHLTLLPYIKSAAELKTKPTQHSVKELLSIGIQPDILICRTEYDVDADTKRKIALFTNVEARAVVVCKDAKTIYQIPRGFYEQNVDDLICERFGFTDLPEADLTDWDNVVEALLNPEYTVRVAMVGKYVELPDAYKSVNEALLHAGIKNRVKVQIDYVNAEELESQDVSILKTADAILVPGGFGERGTEGKMKAIQYARENGIPFLGICLGMQLAVIEYARHVAGMPEASSTEFNRSTKYPLIGLITEWLDERGELQQRSLESDLGGTMRLGAQKSELVEGTKTREVYGKAEITERHRHRYEMNNRFIEAIEQAGMKISGYSSAQHLVETVEIPEHPWFIAVQFHPEFTSSPRDGHPLFASFIDAAKTQHQKSK.

The segment at 1–266 is amidoligase domain; the sequence is MTHFIFVTGG…DDLICERFGF (266 aa). Position 13 (Ser13) interacts with CTP. Residue Ser13 participates in UTP binding. ATP contacts are provided by residues 14-19 and Asp71; that span reads SLGKGI. Mg(2+) contacts are provided by Asp71 and Glu140. CTP is bound by residues 147 to 149, 187 to 192, and Lys223; these read DIE and KTKPTQ. Residues 187 to 192 and Lys223 contribute to the UTP site; that span reads KTKPTQ. Position 239–241 (239–241) interacts with ATP; it reads KDA. Positions 292 to 543 constitute a Glutamine amidotransferase type-1 domain; the sequence is RVAMVGKYVE…IDAAKTQHQK (252 aa). Gly353 contacts L-glutamine. The active-site Nucleophile; for glutamine hydrolysis is Cys380. Residues 381–384, Glu404, and Arg471 each bind L-glutamine; that span reads LGMQ. Catalysis depends on residues His516 and Glu518.

The protein belongs to the CTP synthase family. In terms of assembly, homotetramer.

It carries out the reaction UTP + L-glutamine + ATP + H2O = CTP + L-glutamate + ADP + phosphate + 2 H(+). It catalyses the reaction L-glutamine + H2O = L-glutamate + NH4(+). The enzyme catalyses UTP + NH4(+) + ATP = CTP + ADP + phosphate + 2 H(+). It participates in pyrimidine metabolism; CTP biosynthesis via de novo pathway; CTP from UDP: step 2/2. Its activity is regulated as follows. Allosterically activated by GTP, when glutamine is the substrate; GTP has no effect on the reaction when ammonia is the substrate. The allosteric effector GTP functions by stabilizing the protein conformation that binds the tetrahedral intermediate(s) formed during glutamine hydrolysis. Inhibited by the product CTP, via allosteric rather than competitive inhibition. Its function is as follows. Catalyzes the ATP-dependent amination of UTP to CTP with either L-glutamine or ammonia as the source of nitrogen. Regulates intracellular CTP levels through interactions with the four ribonucleotide triphosphates. In Acinetobacter baumannii (strain AB307-0294), this protein is CTP synthase.